Reading from the N-terminus, the 193-residue chain is Acyl carrier protein phosphodiesterase (193 aa).

The protein belongs to the AcpH family.

It carries out the reaction holo-[ACP] + H2O = apo-[ACP] + (R)-4'-phosphopantetheine + H(+). Converts holo-ACP to apo-ACP by hydrolytic cleavage of the phosphopantetheine prosthetic group from ACP. The sequence is that of Acyl carrier protein phosphodiesterase from Yersinia pestis.